Reading from the N-terminus, the 424-residue chain is Tyrosine--tRNA ligase (424 aa).

Y37 lines the L-tyrosine pocket. A 'HIGH' region motif is present at residues 42–51; sequence PTADSLHLGH. K144 bears the N6-acetyllysine mark. Residues Y175 and Q179 each contribute to the L-tyrosine site. Residues 235 to 239 carry the 'KMSKS' region motif; sequence KFGKT. K238 contributes to the ATP binding site. Residues 357–414 form the S4 RNA-binding domain; the sequence is ADLMQALVDSELQPSRGQARKTIASNAITINGEKQSDPEYFFKEEDRLFGRFTLLRRG.

Belongs to the class-I aminoacyl-tRNA synthetase family. TyrS type 1 subfamily. In terms of assembly, homodimer.

It is found in the cytoplasm. It catalyses the reaction tRNA(Tyr) + L-tyrosine + ATP = L-tyrosyl-tRNA(Tyr) + AMP + diphosphate + H(+). Its function is as follows. Catalyzes the attachment of tyrosine to tRNA(Tyr) in a two-step reaction: tyrosine is first activated by ATP to form Tyr-AMP and then transferred to the acceptor end of tRNA(Tyr). This chain is Tyrosine--tRNA ligase, found in Shigella dysenteriae serotype 1 (strain Sd197).